Reading from the N-terminus, the 91-residue chain is DNA-directed RNA polymerase subunit omega (91 aa).

It belongs to the RNA polymerase subunit omega family. In terms of assembly, the RNAP catalytic core consists of 2 alpha, 1 beta, 1 beta' and 1 omega subunit. When a sigma factor is associated with the core the holoenzyme is formed, which can initiate transcription.

The enzyme catalyses RNA(n) + a ribonucleoside 5'-triphosphate = RNA(n+1) + diphosphate. Promotes RNA polymerase assembly. Latches the N- and C-terminal regions of the beta' subunit thereby facilitating its interaction with the beta and alpha subunits. This chain is DNA-directed RNA polymerase subunit omega, found in Aeromonas hydrophila subsp. hydrophila (strain ATCC 7966 / DSM 30187 / BCRC 13018 / CCUG 14551 / JCM 1027 / KCTC 2358 / NCIMB 9240 / NCTC 8049).